The primary structure comprises 411 residues: Formate-dependent phosphoribosylglycinamide formyltransferase (411 aa).

25–26 (EL) is a N(1)-(5-phospho-beta-D-ribosyl)glycinamide binding site. ATP-binding positions include R118, K159, 164–169 (SSGAGQ), 199–202 (EQYI), and E207. The ATP-grasp domain maps to 123-318 (TFAHDKLGLP…EFDLHARAIL (196 aa)). Mg(2+) contacts are provided by E277 and E289. N(1)-(5-phospho-beta-D-ribosyl)glycinamide is bound by residues D296, K366, and 373-374 (RR).

This sequence belongs to the PurK/PurT family. As to quaternary structure, homodimer.

The catalysed reaction is N(1)-(5-phospho-beta-D-ribosyl)glycinamide + formate + ATP = N(2)-formyl-N(1)-(5-phospho-beta-D-ribosyl)glycinamide + ADP + phosphate + H(+). The protein operates within purine metabolism; IMP biosynthesis via de novo pathway; N(2)-formyl-N(1)-(5-phospho-D-ribosyl)glycinamide from N(1)-(5-phospho-D-ribosyl)glycinamide (formate route): step 1/1. In terms of biological role, involved in the de novo purine biosynthesis. Catalyzes the transfer of formate to 5-phospho-ribosyl-glycinamide (GAR), producing 5-phospho-ribosyl-N-formylglycinamide (FGAR). Formate is provided by PurU via hydrolysis of 10-formyl-tetrahydrofolate. This Corynebacterium jeikeium (strain K411) protein is Formate-dependent phosphoribosylglycinamide formyltransferase.